Consider the following 335-residue polypeptide: Holliday junction branch migration complex subunit RuvB (335 aa).

The segment at Met1–Tyr183 is large ATPase domain (RuvB-L). Residues Leu22, Arg23, Gly64, Lys67, Thr68, Thr69, Glu130 to Tyr132, Arg173, Tyr183, and Arg220 contribute to the ATP site. Mg(2+) is bound at residue Thr68. The small ATPAse domain (RuvB-S) stretch occupies residues Thr184–Gln254. Residues Pro257 to Val335 form a head domain (RuvB-H) region. The DNA site is built by Arg293, Arg312, and Arg317.

It belongs to the RuvB family. As to quaternary structure, homohexamer. Forms an RuvA(8)-RuvB(12)-Holliday junction (HJ) complex. HJ DNA is sandwiched between 2 RuvA tetramers; dsDNA enters through RuvA and exits via RuvB. An RuvB hexamer assembles on each DNA strand where it exits the tetramer. Each RuvB hexamer is contacted by two RuvA subunits (via domain III) on 2 adjacent RuvB subunits; this complex drives branch migration. In the full resolvosome a probable DNA-RuvA(4)-RuvB(12)-RuvC(2) complex forms which resolves the HJ.

It localises to the cytoplasm. The enzyme catalyses ATP + H2O = ADP + phosphate + H(+). Functionally, the RuvA-RuvB-RuvC complex processes Holliday junction (HJ) DNA during genetic recombination and DNA repair, while the RuvA-RuvB complex plays an important role in the rescue of blocked DNA replication forks via replication fork reversal (RFR). RuvA specifically binds to HJ cruciform DNA, conferring on it an open structure. The RuvB hexamer acts as an ATP-dependent pump, pulling dsDNA into and through the RuvAB complex. RuvB forms 2 homohexamers on either side of HJ DNA bound by 1 or 2 RuvA tetramers; 4 subunits per hexamer contact DNA at a time. Coordinated motions by a converter formed by DNA-disengaged RuvB subunits stimulates ATP hydrolysis and nucleotide exchange. Immobilization of the converter enables RuvB to convert the ATP-contained energy into a lever motion, pulling 2 nucleotides of DNA out of the RuvA tetramer per ATP hydrolyzed, thus driving DNA branch migration. The RuvB motors rotate together with the DNA substrate, which together with the progressing nucleotide cycle form the mechanistic basis for DNA recombination by continuous HJ branch migration. Branch migration allows RuvC to scan DNA until it finds its consensus sequence, where it cleaves and resolves cruciform DNA. This Listeria monocytogenes serotype 4b (strain CLIP80459) protein is Holliday junction branch migration complex subunit RuvB.